Reading from the N-terminus, the 689-residue chain is MVKHIWDSERAAQLPKGVEELVYRSNLIGSDRTVCNWGGGNTSMKTTEKDFRGREIEVMWVKGSGSDLATMKAHNFSGLKLDDIRPLIKRDQMPDEEMVDYLSHCMIDSKHPRPSIETLLHAFLPYKHVDHTHPDAIISICCADNGKQIAEDIYGNRFVWVPYVRPGFTLSKMIAEGVANNPHAELVLMEKHGLVTWGETSETCYQKTISIIQEAEQYINDRINQHEVFGGKRYQPLPEDKRKQILAGIMPVIRGAVSEEKKMILSYDDHDDVLEFVNSVQAPALSQIGAACPDHLVHTKRVPLYIDWNPETQDVHKLADLIKSGVETFTSEYQAYFTRNQQDGDQIFESAPRVILIPGIGMVNTGKSYAMSKVSGALYRRAIAVMKGATALGQFVSLHENESYHVEYWPLELYKLTLAPPEAEFSRKVALITGGAGGIGSAACRRFAAEGGHVIVADLNIEGAQKIAGEINDAYGKGRAMAVKMDVTKEEDVQSAFERAALAYGGIDIVVNNAGLATSSPFDETSLKEWNLNMNVLGTGYFLVAREAFKQMKHQNRGGSMVFVGSKNSVYAGKNASAYSSVKALETHLARCIAAEGGEFGIRVNSVLPDAVLQGSAIWGSSWREERAAAYGIEPDQLEEHYRKRTALLVNIYPEDIAEAIAFFASSKAEKTTGCMITVDGGVPAAFTR.

A substrate-binding site is contributed by serine 566. Tyrosine 579 functions as the Proton acceptor in the catalytic mechanism.

This sequence belongs to the short-chain dehydrogenases/reductases (SDR) family.

This is an uncharacterized protein from Bacillus subtilis (strain 168).